A 369-amino-acid polypeptide reads, in one-letter code: Nuclear pore complex-interacting protein family member A6 (369 aa).

Positions 151 to 170 are disordered; it reads SMKEREHGEKERQVSEAEEN.

This sequence belongs to the NPIP family.

The chain is Nuclear pore complex-interacting protein family member A6 from Homo sapiens (Human).